The following is a 2157-amino-acid chain: Polyketide synthase 2 (2157 aa).

An N-terminal acylcarrier protein transacylase domain (SAT) region spans residues 7–244 (FIFGDQTGGF…IPIPIWAPYH (238 aa)). The 434-residue stretch at 374-807 (DSKIAIIGMS…GGNSALLLED (434 aa)) folds into the Ketosynthase family 3 (KS3) domain. Residues Cys-546, His-681, and His-723 each act as for beta-ketoacyl synthase activity in the active site. A malonyl-CoA:ACP transacylase (MAT) domain region spans residues 908-1213 (GFVFSGQGAQ…ASLHRKDDGW (306 aa)). Ser-998 (for acyl/malonyl transferase activity) is an active-site residue. Positions 1290 to 1605 (TSSVQKIIRQ…RSLLNKVLPP (316 aa)) are product template (PT) domain. The segment at 1294–1428 (QKIIRQTDGP…CLLRFADPTS (135 aa)) is N-terminal hotdog fold. The PKS/mFAS DH domain maps to 1294–1600 (QKIIRQTDGP…FLGMSRSLLN (307 aa)). His-1327 acts as the Proton acceptor; for dehydratase activity in catalysis. The interval 1455 to 1600 (TDSLLSRGIV…FLGMSRSLLN (146 aa)) is C-terminal hotdog fold. Asp-1514 functions as the Proton donor; for dehydratase activity in the catalytic mechanism. The disordered stretch occupies residues 1626-1652 (AASAKDTERRPLDIPTRAQRQPSSAQT). Over residues 1643-1652 (AQRQPSSAQT) the composition is skewed to polar residues. Residues 1649 to 1726 (SAQTGTMGRI…ELKAFLGADQ (78 aa)) form the Carrier 1 domain. The residue at position 1686 (Ser-1686) is an O-(pantetheine 4'-phosphoryl)serine. The segment at 1733 to 1762 (ACESSNGQHTPQTSDKGSGTLAVQKTDDDT) is disordered. The segment covering 1735–1755 (ESSNGQHTPQTSDKGSGTLAV) has biased composition (polar residues). The 75-residue stretch at 1765–1839 (DMTLNRVCAI…SLQKALCGSE (75 aa)) folds into the Carrier 2 domain. Ser-1799 bears the O-(pantetheine 4'-phosphoryl)serine mark. Residues 1840-1859 (AASNGAPEANETTPSSHRLE) form a disordered region. A thioesterase (TE) domain region spans residues 1875–2151 (ASPPHATSIL…MIEMGNLIGE (277 aa)). Ser-1981 serves as the catalytic For thioesterase activity.

Polyketide synthase; part of the Pks2 gene cluster that mediates the formation of infectious structures (appressoria), enabling these fungi to kill insects faster. The product of the Pks2 gene cluster is different from the one of Pks1 and has still not been identified. This Metarhizium robertsii (strain ARSEF 23 / ATCC MYA-3075) (Metarhizium anisopliae (strain ARSEF 23)) protein is Polyketide synthase 2.